We begin with the raw amino-acid sequence, 460 residues long: Argininosuccinate lyase (460 aa).

This sequence belongs to the lyase 1 family. Argininosuccinate lyase subfamily.

Its subcellular location is the cytoplasm. The catalysed reaction is 2-(N(omega)-L-arginino)succinate = fumarate + L-arginine. Its pathway is amino-acid biosynthesis; L-arginine biosynthesis; L-arginine from L-ornithine and carbamoyl phosphate: step 3/3. This chain is Argininosuccinate lyase, found in Staphylococcus haemolyticus (strain JCSC1435).